Reading from the N-terminus, the 493-residue chain is Growth-regulating factor 8 (493 aa).

In terms of domain architecture, QLQ spans 149-184; that stretch reads AFSEAQWHELERQRNIYKYMMASVPVPPELLTPFPK. The WRC domain occupies 243–287; sequence DLEPWRCKRTDGKKWRCSRNVIPDQKYCERHTHKSRPRSRKHVES. 2 short sequence motifs (bipartite nuclear localization signal) span residues 248–258 and 276–283; these read RCKRTDGKKWR and KSRPRSRK. The segment at 270 to 302 is disordered; it reads CERHTHKSRPRSRKHVESSHQSSHHNDIRTAKN. A compositionally biased stretch (basic residues) spans 273 to 283; that stretch reads HTHKSRPRSRK.

Belongs to the GRF family. Predominantly expressed in shoot tips and flowers.

Its subcellular location is the nucleus. Functionally, transcription activator that plays a role in the regulation of cell expansion in leaf and cotyledons tissues. Component of a network formed by miR396, the GRFs and their interacting factors (GIFs) acting in the regulation of meristem function, at least partially through the control of cell proliferation. The sequence is that of Growth-regulating factor 8 (GRF8) from Arabidopsis thaliana (Mouse-ear cress).